Reading from the N-terminus, the 180-residue chain is Transcriptional repressor NrdR (180 aa).

A zinc finger lies at 3–34 (CPYCQNTSSRVLESRSTEAGQSIRRRRECLQC). Residues 49-139 (ISVLKKDKSK…VYGEFKGITD (91 aa)) enclose the ATP-cone domain. The segment at 148–180 (QQEERESSSSPEWSDAGEEATVIEDSSQVMASS) is disordered. Residues 171-180 (EDSSQVMASS) are compositionally biased toward polar residues.

The protein belongs to the NrdR family. Requires Zn(2+) as cofactor.

In terms of biological role, negatively regulates transcription of bacterial ribonucleotide reductase nrd genes and operons by binding to NrdR-boxes. In Gloeothece citriformis (strain PCC 7424) (Cyanothece sp. (strain PCC 7424)), this protein is Transcriptional repressor NrdR.